The chain runs to 336 residues: MLALGKLLELTLAGREPAEKTQLTVDGVRMRWLSEGALEVRPPEARDNGLDLLLSAGIHGNETAPIELLDRLLHDIARGDLKPRARILFLFGNPEAMRRGERFVEQDVNRLFNGRHESSSGFEALRACELERLAASFFSQPDRQRLHYDLHTAIRGSKIEQFALYPWKDGRQHSRRELARLRAAGMEAVLLQNKPSIVFSAYTYDQLGAESFTLELGKARPFGQNQGVNVERLETRLKQIIDGSEPPAEQDSLDGLQLFSVAREVIKHSDSFHLHLPADIENFSELEVGYLLAEDIAQTRWVIEETGARIIFPNPKVKNGLRAGILIVPATADGLA.

The Zn(2+) site is built by His-59, Glu-62, and His-151. The active site involves Glu-215.

This sequence belongs to the AspA/AstE family. Succinylglutamate desuccinylase subfamily. It depends on Zn(2+) as a cofactor.

The catalysed reaction is N-succinyl-L-glutamate + H2O = L-glutamate + succinate. The protein operates within amino-acid degradation; L-arginine degradation via AST pathway; L-glutamate and succinate from L-arginine: step 5/5. In terms of biological role, transforms N(2)-succinylglutamate into succinate and glutamate. This is Succinylglutamate desuccinylase from Pseudomonas fluorescens (strain ATCC BAA-477 / NRRL B-23932 / Pf-5).